We begin with the raw amino-acid sequence, 378 residues long: Queuine tRNA-ribosyltransferase (378 aa).

D91 acts as the Proton acceptor in catalysis. Substrate-binding positions include 91–95 (DSGGF), D145, Q189, and G216. The tract at residues 247 to 253 (GVGKPED) is RNA binding. Catalysis depends on D266, which acts as the Nucleophile. Positions 271–275 (TRNAR) are RNA binding; important for wobble base 34 recognition. Residues C304, C306, C309, and H335 each contribute to the Zn(2+) site.

This sequence belongs to the queuine tRNA-ribosyltransferase family. As to quaternary structure, homodimer. Within each dimer, one monomer is responsible for RNA recognition and catalysis, while the other monomer binds to the replacement base PreQ1. It depends on Zn(2+) as a cofactor.

The catalysed reaction is 7-aminomethyl-7-carbaguanine + guanosine(34) in tRNA = 7-aminomethyl-7-carbaguanosine(34) in tRNA + guanine. It participates in tRNA modification; tRNA-queuosine biosynthesis. In terms of biological role, catalyzes the base-exchange of a guanine (G) residue with the queuine precursor 7-aminomethyl-7-deazaguanine (PreQ1) at position 34 (anticodon wobble position) in tRNAs with GU(N) anticodons (tRNA-Asp, -Asn, -His and -Tyr). Catalysis occurs through a double-displacement mechanism. The nucleophile active site attacks the C1' of nucleotide 34 to detach the guanine base from the RNA, forming a covalent enzyme-RNA intermediate. The proton acceptor active site deprotonates the incoming PreQ1, allowing a nucleophilic attack on the C1' of the ribose to form the product. After dissociation, two additional enzymatic reactions on the tRNA convert PreQ1 to queuine (Q), resulting in the hypermodified nucleoside queuosine (7-(((4,5-cis-dihydroxy-2-cyclopenten-1-yl)amino)methyl)-7-deazaguanosine). In Vibrio campbellii (strain ATCC BAA-1116), this protein is Queuine tRNA-ribosyltransferase.